The following is a 640-amino-acid chain: MSPRQLIPTLIPEWAPLSQQSCIREDELDSPPITPTSQTSSFGSSFSQQKPTYSTIIGENIHTILDEIRPYVKKITVSDQDKKTINQYTLGVSAGSGQFGYVRKAYSSTLGKVVAVKIIPKKPWNAQQYSVNQVMRQIQLWKSKGKITTNMSGNEAMRLMNIEKCRWEIFAASRLRNNVHIVRLIECLDSPFSESIWIVTNWCSLGELQWKRDDDEDILPQWKKIVISNCSVSTFAKKILEDMTKGLEYLHSQGCIHRDIKPSNILLDEEEKVAKLSDFGSCIFTPQSLPFSDANFEDCFQRELNKIVGTPAFIAPELCHLGNSKRDFVTDGFKLDIWSLGVTLYCLLYNELPFFGENEFETYHKIIEVSLSSKINGNTLNDLVIKRLLEKDVTLRISIQDLVKVLSRDQPIDSRNHSQISSSSVNPVRNEGPVRRFFGRLLTKKGKKKTSGKGKDKVLVSATSKVTPSIHIDEEPDKECFSTTVLRSSPDSSDYCSSLGEEAIQVTDFLDTFCRSNESLPNLTVNNDKQNSDMKTDRSESSSHSSLKIPTPIKAMIRLKSSPKENGNRTHINCSQDKPSSPLMDRTVGKRTVNNSGARKLAHSSNILNFKAYINSEDSDIRETVEDVKTYLNFADNGQI.

A disordered region spans residues 27-47; the sequence is ELDSPPITPTSQTSSFGSSFS. A compositionally biased stretch (low complexity) spans 35–47; sequence PTSQTSSFGSSFS. Residues 88–420 enclose the Protein kinase domain; that stretch reads YTLGVSAGSG…PIDSRNHSQI (333 aa). Residues 94-102 and K117 each bind ATP; that span reads AGSGQFGYV. At S152 the chain carries Phosphoserine. The active-site Proton acceptor is the D259. 2 positions are modified to phosphoserine: S516 and S519. A compositionally biased stretch (polar residues) spans 520–529; sequence LPNLTVNNDK. Disordered regions lie at residues 520–547 and 562–587; these read LPNL…HSSL and SPKE…MDRT. Residues 530–541 are compositionally biased toward basic and acidic residues; sequence QNSDMKTDRSES. Residues 569-579 are compositionally biased toward polar residues; it reads RTHINCSQDKP.

Belongs to the protein kinase superfamily. Ser/Thr protein kinase family. Mg(2+) serves as cofactor.

The enzyme catalyses L-seryl-[protein] + ATP = O-phospho-L-seryl-[protein] + ADP + H(+). The catalysed reaction is L-threonyl-[protein] + ATP = O-phospho-L-threonyl-[protein] + ADP + H(+). In terms of biological role, important role in G1 events required for bud emergence and septin organization. Coordinates cell growth and cell division at G2/M, essential for efficient cytokinesis and for regulation of SWE1. The protein is Serine/threonine-protein kinase ELM1 (ELM1) of Saccharomyces cerevisiae (strain ATCC 204508 / S288c) (Baker's yeast).